Reading from the N-terminus, the 1407-residue chain is MKDLLKFLKAQTKTEEFDAIKIALASPDMIRSWSFGEVKKPETINYRTFKPERDGLFCARIFGPVKDYECLCGKYKRLKHRGVICEKCGVEVTQTKVRRERMGHIELASPTAHIWFLKSLPSRIGLLLDMPLRDIERVLYFESYVVIEGGMTNLERQQILTEEQYLDALEEFGDEFDAKMGAEAIQALLKSMDLEQECEQLREELNETNSETKRKKLTKRIKLLEAFVQSGNKPEWMILTVLPVLPPDLRPLVPLDGGRFATSDLNDLYRRVINRNNRLKRLLDLAAPDIIVRNEKRMLQEAVDALLDNGRRGRAITGSNKRPLKSLADMIKGKQGRFRQNLLGKRVDYSGRSVITVGPYLRLHQCGLPKKMALELFKPFIYGKLELRGLATTIKAAKKMVEREEAVVWDILDEVIREHPVLLNRAPTLHRLGIQAFEPVLIEGKAIQLHPLVCAAYNADFDGDQMAVHVPLTLEAQLEARALMMSTNNILSPANGEPIIVPSQDVVLGLYYMTRDCVNAKGEGMVLTGPKEAERLYRTGLASLHARVKVRITEYEKDANGELVAKTSLKDTTVGRAILWMIVPKGLPYSIVNQALGKKAISKMLNTCYRILGLKPTVIFADQIMYTGFAYAARSGASVGIDDMVIPEKKHEIISEAEAEVAEIQEQFQSGLVTAGERYNKVIDIWAAANDRVSKAMMDNLQTETVINRDGQEEKQVSFNSIYMMADSGARGSAAQIRQLAGMRGLMAKPDGSIIETPITANFREGLNVLQYFISTHGARKGLADTALKTANSGYLTRRLVDVAQDLVVTEDDCGTHEGIMMTPVIEGGDVKEPLRDRVLGRVTAEDVLKPGTADILVPRNTLLHEQWCDLLEENSVDAVKVRSVVSCDTDFGVCAHCYGRDLARGHIINKGEAIGVIAAQSIGEPGTQLTMRTFHIGGAASRAAAESSIQVKNKGSIKLSNVKSVVNSSGKLVITSRNTELKLIDEFGRTKESYKVPYGAVLAKGDGEQVAGGETVANWDPHTMPVITEVSGFVRFTDMIDGQTITRQTDELTGLSSLVVLDSAERTAGGKDLRPALKIVDAQGNDVLIPGTDMPAQYFLPGKAIVQLEDGVQISSGDTLARIPQESGGTKDITGGLPRVADLFEARRPKEPAILAEISGIVSFGKETKGKRRLVITPVDGSDPYEEMIPKWRQLNVFEGERVERGDVISDGPEAPHDILRLRGVHAVTRYIVNEVQDVYRLQGVKINDKHIEVIVRQMLRKATIVNAGSSDFLEGEQVEYSRVKIANRELEANGKVGATYSRDLLGITKASLATESFISAASFQETTRVLTEAAVAGKRDELRGLKENVIVGRLIPAGTGYAYHQDRMRRRAAGEAPAAPQVTAEDASASLAELLNAGLGGSDNE.

Positions 70, 72, 85, and 88 each coordinate Zn(2+). Mg(2+) is bound by residues aspartate 460, aspartate 462, and aspartate 464. Positions 814, 888, 895, and 898 each coordinate Zn(2+). Lysine 972 carries the N6-acetyllysine modification.

It belongs to the RNA polymerase beta' chain family. The RNAP catalytic core consists of 2 alpha, 1 beta, 1 beta' and 1 omega subunit. When a sigma factor is associated with the core the holoenzyme is formed, which can initiate transcription. The cofactor is Mg(2+). Zn(2+) serves as cofactor.

The catalysed reaction is RNA(n) + a ribonucleoside 5'-triphosphate = RNA(n+1) + diphosphate. In terms of biological role, DNA-dependent RNA polymerase catalyzes the transcription of DNA into RNA using the four ribonucleoside triphosphates as substrates. The protein is DNA-directed RNA polymerase subunit beta' of Shigella flexneri serotype 5b (strain 8401).